The sequence spans 244 residues: uncharacterized protein (244 aa).

4 consecutive transmembrane segments (helical) span residues 20-42 (TITA…VVLI), 49-67 (FVYI…ATKV), 82-101 (TPSI…ASVF), and 108-125 (AFLV…ATPI).

Its subcellular location is the cell membrane. This is an uncharacterized protein from Archaeoglobus fulgidus (strain ATCC 49558 / DSM 4304 / JCM 9628 / NBRC 100126 / VC-16).